The following is a 189-amino-acid chain: Transcription factor FapR (189 aa).

The protein belongs to the FapR family.

Its function is as follows. Transcriptional factor involved in regulation of membrane lipid biosynthesis by repressing genes involved in fatty acid and phospholipid metabolism. This is Transcription factor FapR from Exiguobacterium sibiricum (strain DSM 17290 / CCUG 55495 / CIP 109462 / JCM 13490 / 255-15).